We begin with the raw amino-acid sequence, 177 residues long: tRNA-splicing endonuclease (177 aa).

Catalysis depends on residues Y114, H123, and K154.

The protein belongs to the tRNA-intron endonuclease family. Archaeal short subfamily. In terms of assembly, homotetramer; although the tetramer contains four active sites, only two participate in the cleavage. Therefore, it should be considered as a dimer of dimers.

It catalyses the reaction pretRNA = a 3'-half-tRNA molecule with a 5'-OH end + a 5'-half-tRNA molecule with a 2',3'-cyclic phosphate end + an intron with a 2',3'-cyclic phosphate and a 5'-hydroxyl terminus.. Endonuclease that removes tRNA introns. Cleaves pre-tRNA at the 5'- and 3'-splice sites to release the intron. The products are an intron and two tRNA half-molecules bearing 2',3' cyclic phosphate and 5'-OH termini. Recognizes a pseudosymmetric substrate in which 2 bulged loops of 3 bases are separated by a stem of 4 bp. In Methanococcus maripaludis (strain DSM 14266 / JCM 13030 / NBRC 101832 / S2 / LL), this protein is tRNA-splicing endonuclease.